Here is a 396-residue protein sequence, read N- to C-terminus: ATP-dependent RNA helicase eIF4A (396 aa).

A Q motif motif is present at residues 23–51 (YEFDDMNLNEKLLRGVFGYGFNKPSAIQQ). The Helicase ATP-binding domain maps to 54 to 223 (IMPIIEGNDV…AKFMQNPVRI (170 aa)). Residue 67-74 (AQSGTGKT) participates in ATP binding. The DEAD box signature appears at 171–174 (DEAD). The region spanning 234–395 (GIKQFYVNVE…ELPSDIGTLF (162 aa)) is the Helicase C-terminal domain.

The protein belongs to the DEAD box helicase family. eIF4A subfamily. Component of the eIF4F complex, which composition varies with external and internal environmental conditions. It is composed of at least eIF4A, eIF4E and eIF4G.

It localises to the cytoplasm. It catalyses the reaction ATP + H2O = ADP + phosphate + H(+). Its function is as follows. ATP-dependent RNA helicase which is a subunit of the eIF4F complex involved in cap recognition and is required for mRNA binding to ribosome. In the current model of translation initiation, eIF4A unwinds RNA secondary structures in the 5'-UTR of mRNAs which is necessary to allow efficient binding of the small ribosomal subunit, and subsequent scanning for the initiator codon. In Candida glabrata (strain ATCC 2001 / BCRC 20586 / JCM 3761 / NBRC 0622 / NRRL Y-65 / CBS 138) (Yeast), this protein is ATP-dependent RNA helicase eIF4A (TIF1).